The chain runs to 112 residues: Photosystem II reaction center Psb28 protein (112 aa).

This sequence belongs to the Psb28 family. In terms of assembly, part of the photosystem II complex.

Its subcellular location is the cellular thylakoid membrane. The polypeptide is Photosystem II reaction center Psb28 protein (Microcystis aeruginosa (strain NIES-843 / IAM M-2473)).